A 161-amino-acid chain; its full sequence is Phosphopantetheine adenylyltransferase (161 aa).

Ser-11 is a binding site for substrate. ATP-binding positions include 11-12 (SF) and His-19. Substrate-binding residues include Lys-43, Leu-75, and Arg-89. ATP-binding positions include 90-92 (GLR), Glu-100, and 125-131 (YSYLSSS).

Belongs to the bacterial CoaD family. In terms of assembly, homohexamer. It depends on Mg(2+) as a cofactor.

The protein localises to the cytoplasm. It carries out the reaction (R)-4'-phosphopantetheine + ATP + H(+) = 3'-dephospho-CoA + diphosphate. The protein operates within cofactor biosynthesis; coenzyme A biosynthesis; CoA from (R)-pantothenate: step 4/5. Its function is as follows. Reversibly transfers an adenylyl group from ATP to 4'-phosphopantetheine, yielding dephospho-CoA (dPCoA) and pyrophosphate. This chain is Phosphopantetheine adenylyltransferase, found in Geobacter sp. (strain M21).